We begin with the raw amino-acid sequence, 419 residues long: D-inositol 3-phosphate glycosyltransferase (419 aa).

Histidine 9 is a binding site for 1D-myo-inositol 3-phosphate. UDP-N-acetyl-alpha-D-glucosamine contacts are provided by residues 15-16 and glycine 23; that span reads QP. Residues 20–25, lysine 78, tyrosine 110, threonine 134, and arginine 154 contribute to the 1D-myo-inositol 3-phosphate site; that span reads DAGGMN. Residues arginine 231, lysine 236, and arginine 295 each contribute to the UDP-N-acetyl-alpha-D-glucosamine site. Positions 304, 305, and 307 each coordinate Mg(2+). Positions 317 and 325 each coordinate UDP-N-acetyl-alpha-D-glucosamine. A Mg(2+)-binding site is contributed by threonine 331.

The protein belongs to the glycosyltransferase group 1 family. MshA subfamily. Homodimer.

The enzyme catalyses 1D-myo-inositol 3-phosphate + UDP-N-acetyl-alpha-D-glucosamine = 1D-myo-inositol 2-acetamido-2-deoxy-alpha-D-glucopyranoside 3-phosphate + UDP + H(+). Functionally, catalyzes the transfer of a N-acetyl-glucosamine moiety to 1D-myo-inositol 3-phosphate to produce 1D-myo-inositol 2-acetamido-2-deoxy-glucopyranoside 3-phosphate in the mycothiol biosynthesis pathway. The sequence is that of D-inositol 3-phosphate glycosyltransferase from Corynebacterium jeikeium (strain K411).